Here is a 315-residue protein sequence, read N- to C-terminus: Holliday junction branch migration complex subunit RuvB (315 aa).

The segment at 1–168 (MAKKQEIRPK…FGLIGQISNY (168 aa)) is large ATPase domain (RuvB-L). ATP-binding positions include Ile-7, Arg-8, Gly-49, Lys-52, Thr-53, Ser-54, 115 to 117 (EDF), Arg-158, Tyr-168, and Arg-205. Thr-53 is a Mg(2+) binding site. The small ATPAse domain (RuvB-S) stretch occupies residues 169–239 (QVEDIEKIIK…LVNKTLKQLG (71 aa)). Residues 242-315 (ENGLNESQVK…QKGISYLERI (74 aa)) form a head domain (RuvB-H) region. Residues Lys-297 and Arg-302 each contribute to the DNA site.

It belongs to the RuvB family. Homohexamer. Forms an RuvA(8)-RuvB(12)-Holliday junction (HJ) complex. HJ DNA is sandwiched between 2 RuvA tetramers; dsDNA enters through RuvA and exits via RuvB. An RuvB hexamer assembles on each DNA strand where it exits the tetramer. Each RuvB hexamer is contacted by two RuvA subunits (via domain III) on 2 adjacent RuvB subunits; this complex drives branch migration. In the full resolvosome a probable DNA-RuvA(4)-RuvB(12)-RuvC(2) complex forms which resolves the HJ.

It localises to the cytoplasm. The catalysed reaction is ATP + H2O = ADP + phosphate + H(+). The RuvA-RuvB-RuvC complex processes Holliday junction (HJ) DNA during genetic recombination and DNA repair, while the RuvA-RuvB complex plays an important role in the rescue of blocked DNA replication forks via replication fork reversal (RFR). RuvA specifically binds to HJ cruciform DNA, conferring on it an open structure. The RuvB hexamer acts as an ATP-dependent pump, pulling dsDNA into and through the RuvAB complex. RuvB forms 2 homohexamers on either side of HJ DNA bound by 1 or 2 RuvA tetramers; 4 subunits per hexamer contact DNA at a time. Coordinated motions by a converter formed by DNA-disengaged RuvB subunits stimulates ATP hydrolysis and nucleotide exchange. Immobilization of the converter enables RuvB to convert the ATP-contained energy into a lever motion, pulling 2 nucleotides of DNA out of the RuvA tetramer per ATP hydrolyzed, thus driving DNA branch migration. The RuvB motors rotate together with the DNA substrate, which together with the progressing nucleotide cycle form the mechanistic basis for DNA recombination by continuous HJ branch migration. Branch migration allows RuvC to scan DNA until it finds its consensus sequence, where it cleaves and resolves cruciform DNA. This chain is Holliday junction branch migration complex subunit RuvB, found in Mycoplasmopsis pulmonis (strain UAB CTIP) (Mycoplasma pulmonis).